The chain runs to 92 residues: Small ribosomal subunit protein uS19 (92 aa).

The protein belongs to the universal ribosomal protein uS19 family.

Its function is as follows. Protein S19 forms a complex with S13 that binds strongly to the 16S ribosomal RNA. The polypeptide is Small ribosomal subunit protein uS19 (Photorhabdus laumondii subsp. laumondii (strain DSM 15139 / CIP 105565 / TT01) (Photorhabdus luminescens subsp. laumondii)).